The following is a 378-amino-acid chain: Heterogeneous nuclear ribonucleoprotein A3 (378 aa).

An N-acetylmethionine modification is found at Met1. The segment covering 1–10 has biased composition (pro residues); sequence MEVKPPPGRP. The disordered stretch occupies residues 1–34; sequence MEVKPPPGRPQPDSGRRRRRRGEEGHDPKEPEQL. Residue Lys4 forms a Glycyl lysine isopeptide (Lys-Gly) (interchain with G-Cter in SUMO2) linkage. Ser14 carries the post-translational modification Phosphoserine. Residues 21 to 34 are compositionally biased toward basic and acidic residues; that stretch reads RGEEGHDPKEPEQL. The 84-residue stretch at 35 to 118 folds into the RRM 1 domain; it reads RKLFIGGLSF…RAVSREDSVK (84 aa). Lys36 participates in a covalent cross-link: Glycyl lysine isopeptide (Lys-Gly) (interchain with G-Cter in SUMO2). Phosphoserine is present on Ser43. Residue Arg52 is modified to Dimethylated arginine; alternate. Arg52 is modified (omega-N-methylarginine; alternate). Arg76 bears the Omega-N-methylarginine mark. Residues Ser112 and Ser116 each carry the phosphoserine modification. A Glycyl lysine isopeptide (Lys-Gly) (interchain with G-Cter in SUMO2) cross-link involves residue Lys118. Thr124 carries the post-translational modification Phosphothreonine. The RRM 2 domain occupies 126–205; the sequence is KKIFVGGIKE…CEVKKALSKQ (80 aa). Residue Lys134 is modified to N6-acetyllysine; alternate. Lys134 participates in a covalent cross-link: Glycyl lysine isopeptide (Lys-Gly) (interchain with G-Cter in SUMO2); alternate. Glycyl lysine isopeptide (Lys-Gly) (interchain with G-Cter in SUMO2) cross-links involve residues Lys151 and Lys182. The interval 204–225 is disordered; sequence KQEMQSAGSQRGRGGGSGNFMG. Omega-N-methylarginine; alternate occurs at positions 214, 216, 226, 239, and 246. Residues Arg214, Arg216, Arg226, Arg239, and Arg246 each carry the asymmetric dimethylarginine; alternate modification. Positions 214–225 are enriched in gly residues; it reads RGRGGGSGNFMG. Residue Arg257 is modified to Omega-N-methylarginine. At Arg286 the chain carries Asymmetric dimethylarginine. The disordered stretch occupies residues 336-378; sequence SGQQQSNYGPMKGGSFGGRSSGSPYGGGYGSGGGSGGYGSRRF. Positions 346–378 are enriched in gly residues; sequence MKGGSFGGRSSGSPYGGGYGSGGGSGGYGSRRF. Ser350 is subject to Phosphoserine. Omega-N-methylarginine is present on Arg354. The residue at position 358 (Ser358) is a Phosphoserine. 2 positions are modified to phosphotyrosine: Tyr360 and Tyr364. Phosphoserine is present on residues Ser366 and Ser370. Phosphotyrosine is present on Tyr373. Phosphoserine is present on Ser375.

In terms of assembly, identified in the spliceosome C complex.

It localises to the nucleus. In terms of biological role, plays a role in cytoplasmic trafficking of RNA. Binds to the cis-acting response element, A2RE. May be involved in pre-mRNA splicing. In Homo sapiens (Human), this protein is Heterogeneous nuclear ribonucleoprotein A3 (HNRNPA3).